Consider the following 288-residue polypeptide: Syntaxin-1B (288 aa).

The span at 1–13 shows a compositional bias: basic and acidic residues; the sequence is MKDRTQELRSAKD. A disordered region spans residues 1-20; sequence MKDRTQELRSAKDSDDEEEV. Topologically, residues 1–264 are cytoplasmic; the sequence is MKDRTQELRS…KYQSKARRKK (264 aa). A phosphoserine mark is found at serine 10 and serine 14. Residues 29–104 are a coiled coil; the sequence is MDEFFEQVEE…IEQSIEQEEG (76 aa). Positions 191 to 253 constitute a t-SNARE coiled-coil homology domain; that stretch reads LNEIETRHNE…ERAVSDTKKA (63 aa). The chain crosses the membrane as a helical; Anchor for type IV membrane protein span at residues 265–288; the sequence is IMIIICCVVLGVVLASSIGGTLGL.

Belongs to the syntaxin family. Interacts with OTOF. Interacts with SYT6 and SYT8; the interaction is Ca(2+)-dependent. In terms of processing, phosphorylated by CK2. (Microbial infection) Targeted and hydrolyzed by C.botulinum neurotoxin type C (BoNT/C); cleavage by BoNT/C inhibits neurotransmitter release. Probably hydrolyzes the 252-Lys-|-Ala-253 bond.

Its subcellular location is the membrane. Potentially involved in docking of synaptic vesicles at presynaptic active zones. May mediate Ca(2+)-regulation of exocytosis acrosomal reaction in sperm. The sequence is that of Syntaxin-1B (STX1B) from Bos taurus (Bovine).